The chain runs to 401 residues: GRIP domain-containing protein C119.12 (401 aa).

Residues 7 to 296 adopt a coiled-coil conformation; the sequence is NETKLVENEN…TLLIGKLQHE (290 aa). The region spanning 315 to 366 is the GRIP domain; the sequence is NNAEKIDKQLISNLFVSFLTLPRADTKRFEILQLISSVLDWNDTQREQTGLQ.

The protein localises to the golgi apparatus lumen. In Schizosaccharomyces pombe (strain 972 / ATCC 24843) (Fission yeast), this protein is GRIP domain-containing protein C119.12.